A 63-amino-acid chain; its full sequence is Transmembrane protein ZNF593OS (63 aa).

The helical transmembrane segment at 30 to 50 (LAGVVATVLAVLGLGGSCYAV) threads the bilayer.

The protein localises to the membrane. This chain is Transmembrane protein ZNF593OS, found in Homo sapiens (Human).